The following is a 714-amino-acid chain: MLVHLFRVGIRGGPVPRWSLQSLRFQTFSAARSSDDQFSSCLLRAVAQLRSQLRAHLPRSPPASHRSTSAWCWVGGTLVVPAVLWQHPRFCLIALCEAKGSPPAQPTRARELRFKWKLFWHFLHPHLLALGLAIVLALGAALVNVQIPLLLGQLVEIVAKYTREHVGSFVSESRRLSIQLLLLYGVQGLLTFGYLVLLSHMGERMAMDMRKALFSSLLRQDIAFFDAKKTGQLVSRLTTDVQEFKSSFKLVISQGLRSSTQVIGSLMTLSILSPRLTLMLAVVTPALMGVGTLMGSGLRKLSRQCQEQIARATGVADEALGSVRTVRAFAMEKREEERYQAELESCCCKAEELGRGIALFQGLSNIAFNCMVLGTLFIGGSLVAGQQLKGGDLMSFLVASQTVQRSMASLSVLFGQVVRGLSAGARVFEYMSLSPVIPLTGGYSIPSKDLRGSITFQNVSFSYPCRPGFNVLKNFTLKLPPGKIVALVGQSGGGKTTVASLLERFYDPTAGVVTLDGHDLRTLDPSWLRGQVIGFISQEPVLFATTIMENIRFGKLDASDEEVYTAARKANAHEFISSFPDGYSTVVGERGTTLSGGQKQRLAIARALIKRPTVLILDEATSALDAESERIVQEALDRASAGRTVLVIAHRLSTVRAAHSIIVMANGQVCEAGTHEELLQKGGLYAELIRRQALDASLPSAPPAEKPEDHRSCQ.

The N-terminal 25 residues, 1 to 25, are a transit peptide targeting the mitochondrion; the sequence is MLVHLFRVGIRGGPVPRWSLQSLRF. Transmembrane regions (helical) follow at residues 127–147, 178–198, 278–298, and 365–385; these read LLAL…NVQI, IQLL…LVLL, LMLA…GSGL, and NIAF…LVAG. The 288-residue stretch at 132–419 folds into the ABC transmembrane type-1 domain; it reads LAIVLALGAA…LSVLFGQVVR (288 aa). The ABC transporter domain occupies 454–691; the sequence is ITFQNVSFSY…GGLYAELIRR (238 aa). 489–496 provides a ligand contact to ATP; the sequence is GQSGGGKT.

It belongs to the ABC transporter superfamily. ABCB family. Multidrug resistance exporter (TC 3.A.1.201) subfamily. As to quaternary structure, the mitochondrial potassium channel (mitoK(ATP)) is composed of 4 subunits of CCDC51/MITOK and 4 subunits of ABCB8/MITOSUR. Physically interacts with PAAT. Interacts with Neuropilin-1 (NRP1) in mitochondria. Strong expression is found in the heart, brain and testis. In the testis, expressed both in the somatic Sertoli cells and peritubular cells and in the germline (spermatogonia and pachytene spermatocytes). Also expressed in the lung, liver, intestine and kidney.

The protein resides in the mitochondrion inner membrane. With respect to regulation, channel activity inhibited by ATP via ABCB8/MITOSUR subunit. ATP-binding subunit of the mitochondrial ATP-gated potassium channel (mitoK(ATP)). v. An increase in ATP intracellular levels closes the channel, inhibiting K(+) transport, whereas a decrease in ATP levels enhances K(+) uptake in the mitochondrial matrix. Plays a role in mitochondrial iron transport. Required for maintenance of normal cardiac function, possibly by influencing mitochondrial iron export and regulating the maturation of cytosolic iron sulfur cluster-containing enzymes. The chain is Mitochondrial potassium channel ATP-binding subunit from Rattus norvegicus (Rat).